Consider the following 669-residue polypeptide: GTP-binding protein 1 (669 aa).

Positions 1–32 are disordered; the sequence is MAAERSRSPMESPVPASMFAPEPSSPGAARAA. Phosphoserine is present on residues Ser6, Ser8, Ser12, Ser24, Ser25, Ser44, Ser47, and Ser69. The tr-type G domain occupies 158–389; it reads FLEVRVAVVG…LNLLSPRTSY (232 aa). The interval 167–174 is G1; the sequence is GNVDAGKS. Residue 167–174 participates in GTP binding; sequence GNVDAGKS. Residues 206-210 form a G2 region; it reads GRTSS. A G3 region spans residues 252 to 255; that stretch reads DLAG. GTP contacts are provided by residues 252–256 and 308–311; these read DLAGH and TKID. A G4 region spans residues 308–311; it reads TKID. The tract at residues 366 to 368 is G5; that stretch reads SNV. Polar residues predominate over residues 573–595; that stretch reads LLQTTNNSPMNSKPQQIKMQSTK. The interval 573–669 is disordered; the sequence is LLQTTNNSPM…GACMTPASGC (97 aa). Residue Ser580 is modified to Phosphoserine. Positions 633 to 645 are enriched in low complexity; sequence SSSLQPQPKPSSG. Over residues 646–657 the composition is skewed to basic residues; it reads GRRRGGQRHKVK.

The protein belongs to the TRAFAC class translation factor GTPase superfamily. Classic translation factor GTPase family. GTPBP1 subfamily. As to quaternary structure, interacts with EXOSC2/RRP4, EXOSC3/RRP40, EXOSC5/RRP46, HNRNPD, HNRNPR and SYNCRIP. Identified in a complex with AANAT mRNA, but does not bind mRNA by itself.

It localises to the cytoplasm. Its function is as follows. Promotes degradation of target mRNA species. Plays a role in the regulation of circadian mRNA stability. Binds GTP and has GTPase activity. This is GTP-binding protein 1 (GTPBP1) from Bos taurus (Bovine).